A 163-amino-acid polypeptide reads, in one-letter code: Late embryogenesis abundant protein Dc3 (163 aa).

2 disordered regions span residues 1–117 and 139–163; these read MASH…GGLM and FGMA…ARTE. Composition is skewed to basic and acidic residues over residues 28 to 56, 67 to 84, and 91 to 113; these read TMKD…ESKD, GAVK…KEKT, and TKEK…KEKT. 6 repeat units span residues 32–42, 43–53, 65–75, 76–86, 87–97, and 103–115. The 6 X 11 AA approximate repeats stretch occupies residues 32-115; the sequence is KAQAAKDKAS…AVAGKEKTGG (84 aa). The span at 152–163 shows a compositional bias: low complexity; the sequence is TTRVTRSSARTE.

The protein belongs to the LEA type 4 family.

This is Late embryogenesis abundant protein Dc3 from Daucus carota (Wild carrot).